The following is a 338-amino-acid chain: Anthranilate phosphoribosyltransferase (338 aa).

5-phospho-alpha-D-ribose 1-diphosphate is bound by residues G81, 84 to 85 (GD), T89, 91 to 94 (NIST), 109 to 117 (KHGNRAVSS), and S121. An anthranilate-binding site is contributed by G81. S93 is a Mg(2+) binding site. Residue N112 participates in anthranilate binding. Anthranilate is bound at residue R167. 2 residues coordinate Mg(2+): D226 and E227.

This sequence belongs to the anthranilate phosphoribosyltransferase family. As to quaternary structure, homodimer. Requires Mg(2+) as cofactor.

It catalyses the reaction N-(5-phospho-beta-D-ribosyl)anthranilate + diphosphate = 5-phospho-alpha-D-ribose 1-diphosphate + anthranilate. It participates in amino-acid biosynthesis; L-tryptophan biosynthesis; L-tryptophan from chorismate: step 2/5. In terms of biological role, catalyzes the transfer of the phosphoribosyl group of 5-phosphorylribose-1-pyrophosphate (PRPP) to anthranilate to yield N-(5'-phosphoribosyl)-anthranilate (PRA). The chain is Anthranilate phosphoribosyltransferase from Myxococcus xanthus (strain DK1622).